The primary structure comprises 314 residues: Methionyl-tRNA formyltransferase (314 aa).

Position 110–113 (110–113 (SLLP)) interacts with (6S)-5,6,7,8-tetrahydrofolate.

This sequence belongs to the Fmt family.

The enzyme catalyses L-methionyl-tRNA(fMet) + (6R)-10-formyltetrahydrofolate = N-formyl-L-methionyl-tRNA(fMet) + (6S)-5,6,7,8-tetrahydrofolate + H(+). Functionally, attaches a formyl group to the free amino group of methionyl-tRNA(fMet). The formyl group appears to play a dual role in the initiator identity of N-formylmethionyl-tRNA by promoting its recognition by IF2 and preventing the misappropriation of this tRNA by the elongation apparatus. The polypeptide is Methionyl-tRNA formyltransferase (Levilactobacillus brevis (strain ATCC 367 / BCRC 12310 / CIP 105137 / JCM 1170 / LMG 11437 / NCIMB 947 / NCTC 947) (Lactobacillus brevis)).